The sequence spans 347 residues: GTPase Obg (347 aa).

Residues 1 to 159 (MHFIDQAEIE…VRLRLELKLI (159 aa)) enclose the Obg domain. An OBG-type G domain is found at 160-328 (AEVGIVGLPN…LLQRVWQCLG (169 aa)). GTP is bound by residues 166-173 (GLPNAGKS), 191-195 (FTTLQ), 213-216 (DIPG), 280-283 (NKID), and 309-311 (SAI). Mg(2+) contacts are provided by S173 and T193.

Belongs to the TRAFAC class OBG-HflX-like GTPase superfamily. OBG GTPase family. Monomer. Mg(2+) serves as cofactor.

It localises to the cytoplasm. Functionally, an essential GTPase which binds GTP, GDP and possibly (p)ppGpp with moderate affinity, with high nucleotide exchange rates and a fairly low GTP hydrolysis rate. Plays a role in control of the cell cycle, stress response, ribosome biogenesis and in those bacteria that undergo differentiation, in morphogenesis control. The polypeptide is GTPase Obg (Synechococcus sp. (strain JA-2-3B'a(2-13)) (Cyanobacteria bacterium Yellowstone B-Prime)).